A 163-amino-acid polypeptide reads, in one-letter code: Nucleotide-binding protein RHA1_ro01989 (163 aa).

Belongs to the YajQ family.

Functionally, nucleotide-binding protein. This chain is Nucleotide-binding protein RHA1_ro01989, found in Rhodococcus jostii (strain RHA1).